The primary structure comprises 215 residues: Cytochrome b6 (215 aa).

Residues 32-52 form a helical membrane-spanning segment; that stretch reads IFYCLGGITLTCFLVQVATGF. A heme c-binding site is contributed by cysteine 35. Residues histidine 86 and histidine 100 each coordinate heme b. Helical transmembrane passes span 90-110, 116-136, and 186-206; these read ASMM…TGGF, LTWV…VTGY, and LHTF…FLMI. Heme b is bound by residues histidine 187 and histidine 202.

This sequence belongs to the cytochrome b family. PetB subfamily. As to quaternary structure, the 4 large subunits of the cytochrome b6-f complex are cytochrome b6, subunit IV (17 kDa polypeptide, PetD), cytochrome f and the Rieske protein, while the 4 small subunits are PetG, PetL, PetM and PetN. The complex functions as a dimer. Heme b serves as cofactor. The cofactor is heme c.

It localises to the plastid. The protein localises to the chloroplast thylakoid membrane. Its function is as follows. Component of the cytochrome b6-f complex, which mediates electron transfer between photosystem II (PSII) and photosystem I (PSI), cyclic electron flow around PSI, and state transitions. The sequence is that of Cytochrome b6 from Gossypium barbadense (Sea Island cotton).